We begin with the raw amino-acid sequence, 184 residues long: NADH-quinone oxidoreductase subunit B (184 aa).

Residues Cys-37, Cys-38, Cys-103, and Cys-132 each coordinate [4Fe-4S] cluster.

It belongs to the complex I 20 kDa subunit family. In terms of assembly, NDH-1 is composed of 14 different subunits. Subunits NuoB, C, D, E, F, and G constitute the peripheral sector of the complex. [4Fe-4S] cluster is required as a cofactor.

It is found in the cell membrane. The catalysed reaction is a quinone + NADH + 5 H(+)(in) = a quinol + NAD(+) + 4 H(+)(out). Its function is as follows. NDH-1 shuttles electrons from NADH, via FMN and iron-sulfur (Fe-S) centers, to quinones in the respiratory chain. The immediate electron acceptor for the enzyme in this species is believed to be a menaquinone. Couples the redox reaction to proton translocation (for every two electrons transferred, four hydrogen ions are translocated across the cytoplasmic membrane), and thus conserves the redox energy in a proton gradient. This Mycobacterium sp. (strain JLS) protein is NADH-quinone oxidoreductase subunit B.